Reading from the N-terminus, the 1875-residue chain is Nonribosomal peptide synthetase otaB (1875 aa).

The interval 202–590 (GQVRENGDRA…SIRFAGRRQA (389 aa)) is adenylation 1. Positions 724-800 (SPMTAAERVM…DLVAHIKDAG (77 aa)) constitute a Carrier domain. Serine 761 is subject to O-(pantetheine 4'-phosphoryl)serine. Residues 836–1245 (EDVYPCTTLQ…LVSPLDEERL (410 aa)) are condensation. The segment at 1264-1659 (QKQSYAQPQA…ARKDTQVKIR (396 aa)) is adenylation 2.

This sequence belongs to the NRP synthetase family.

The enzyme catalyses 7-carboxymellein + L-phenylalanine + ATP = ochratoxin B + ADP + phosphate + H(+). It functions in the pathway mycotoxin biosynthesis. Functionally, nonribosomal peptide synthetase; part of the gene cluster that mediates the biosynthesis of ochratoxin A (OTA), a mycotoxin composed of a chlorinated type I polyketide dihydroisocoumarin moiety linked to L-phenylalanine, and demonstrated to have nephrotoxic, immunotoxic, genotoxic, neurotoxic, and teratogenic properties. OtaB is responsible for the linking of phenylalanine to the dihydroisocoumarin ring. The pathway begins with the highly reducing polyketide synthase otaA that catalyzes the formation of the isocoumarin group during the initial stages of biosynthesis, starting from one acetate and 4 malonate units, to originate the characteristic pentaketide skeleton 7-methylmellein (7-MM) of the OTA molecule. The newly identified cyclase otaY might be involved in the polyketide cyclization reaction during the initial steps of the OTA biosynthesis. 7-MM is then oxidized into 7-carboxymellein (also called ochratoxin beta) by the cytochrome P450 monooxygenase otaC. The NRPS encoded by the otaB gene is involved in the linking of phenylalanine to the dihydroisocoumarin ring. The reaction catalyzed by NRPS results in the production of ochratoxin B (OTB), which is the non-chlorinated analog of OTA and which subsequently serves as the substrate of the halogenase otaD for chlorination activity to form the final molecular structure of OTA, containing a chlorine atom in the C-5 position of the molecule. This Aspergillus carbonarius (strain ITEM 5010) protein is Nonribosomal peptide synthetase otaB.